We begin with the raw amino-acid sequence, 132 residues long: PGA2-homolog C27.01c (132 aa).

A helical transmembrane segment spans residues 17–34 (WIRIIVYVGGYMLIRPYL). Disordered regions lie at residues 50 to 90 (LLEG…DAEF) and 106 to 132 (EYFK…HLED). A compositionally biased stretch (basic and acidic residues) spans 62-75 (EMTHGTKPKEHGEF). The segment covering 76-87 (DTDDEEEEENPD) has biased composition (acidic residues). A Phosphothreonine modification is found at T77. Residues 106–115 (EYFKNQDKSP) show a composition bias toward basic and acidic residues. Residues 119–132 (YADDDEDIEEHLED) show a composition bias toward acidic residues.

The protein belongs to the PGA2 family.

It is found in the endoplasmic reticulum membrane. The protein resides in the nucleus membrane. Functionally, involved processing and trafficking glycosylated proteins. The protein is PGA2-homolog C27.01c of Schizosaccharomyces pombe (strain 972 / ATCC 24843) (Fission yeast).